Here is a 212-residue protein sequence, read N- to C-terminus: MAKNYYEITLALAGICQSAHLVQQLAHTGNCNNDVLHTSLNSVLNLNPASTLAVYGNDEQNLKVGLETLLGILNTSSNKGAGAELSRYTFSLIALERKLNAKSAALDELGKRIGQLERQLEHFELLSETIVSALAAIYVDVISTLGPRIQVTGSPEVLKNSQVQAKVRAALLAGIRSTVLWQQIGGGRLQLMFSRSQLVKEAKQILARCPSV.

A coiled-coil region spans residues 92-128; it reads LIALERKLNAKSAALDELGKRIGQLERQLEHFELLSE.

The protein belongs to the HflD family.

It localises to the cytoplasm. The protein localises to the cell inner membrane. In Pectobacterium atrosepticum (strain SCRI 1043 / ATCC BAA-672) (Erwinia carotovora subsp. atroseptica), this protein is High frequency lysogenization protein HflD homolog.